We begin with the raw amino-acid sequence, 198 residues long: Recombination protein RecR (198 aa).

The segment at C57 to C72 adopts a C4-type zinc-finger fold. Residues S80 to P175 form the Toprim domain.

It belongs to the RecR family.

Functionally, may play a role in DNA repair. It seems to be involved in an RecBC-independent recombinational process of DNA repair. It may act with RecF and RecO. The polypeptide is Recombination protein RecR (Halalkalibacterium halodurans (strain ATCC BAA-125 / DSM 18197 / FERM 7344 / JCM 9153 / C-125) (Bacillus halodurans)).